The chain runs to 240 residues: Dihydromonapterin reductase (240 aa).

Tyrosine 152 functions as the Proton acceptor in the catalytic mechanism.

Belongs to the short-chain dehydrogenases/reductases (SDR) family. FolM subfamily.

The catalysed reaction is (6S)-5,6,7,8-tetrahydrofolate + NADP(+) = 7,8-dihydrofolate + NADPH + H(+). It catalyses the reaction 7,8-dihydromonapterin + NADPH + H(+) = 5,6,7,8-tetrahydromonapterin + NADP(+). Catalyzes the reduction of dihydromonapterin to tetrahydromonapterin. Also has lower activity with dihydrofolate. The protein is Dihydromonapterin reductase (folM) of Escherichia coli O139:H28 (strain E24377A / ETEC).